Reading from the N-terminus, the 398-residue chain is S-adenosylmethionine synthase (398 aa).

His-19 is an ATP binding site. Asp-21 serves as a coordination point for Mg(2+). Glu-47 contributes to the K(+) binding site. L-methionine is bound by residues Glu-60 and Gln-103. A flexible loop region spans residues 103–113; the sequence is QSPDIAQGVDV. Residues 177-179, 243-244, Asp-252, 258-259, Ala-275, and Lys-279 contribute to the ATP site; these read DGK, RF, and RK. Position 252 (Asp-252) interacts with L-methionine. Residue Lys-283 participates in L-methionine binding.

It belongs to the AdoMet synthase family. As to quaternary structure, homotetramer; dimer of dimers. It depends on Mg(2+) as a cofactor. K(+) is required as a cofactor.

Its subcellular location is the cytoplasm. The enzyme catalyses L-methionine + ATP + H2O = S-adenosyl-L-methionine + phosphate + diphosphate. The protein operates within amino-acid biosynthesis; S-adenosyl-L-methionine biosynthesis; S-adenosyl-L-methionine from L-methionine: step 1/1. Catalyzes the formation of S-adenosylmethionine (AdoMet) from methionine and ATP. The overall synthetic reaction is composed of two sequential steps, AdoMet formation and the subsequent tripolyphosphate hydrolysis which occurs prior to release of AdoMet from the enzyme. The protein is S-adenosylmethionine synthase of Symbiobacterium thermophilum (strain DSM 24528 / JCM 14929 / IAM 14863 / T).